Consider the following 130-residue polypeptide: MGDYIVVLEAPIIVREVESADDAINVAVSKVAKALNKEKLDFVRVEIGYSQCPVCGSPFESAFVIGNVGLVGIYLTLKVFNAQSLEHAERIAKAVVGKALKKVPLKVFEIKEFHDGKEEGIELNNHKNEF.

Belongs to the UPF0212 family.

This chain is UPF0212 protein TSIB_1358, found in Thermococcus sibiricus (strain DSM 12597 / MM 739).